The primary structure comprises 334 residues: Formamidase (334 aa).

In terms of domain architecture, CN hydrolase spans 14–260; sequence FLVAAIQFPV…WEIVTGEIYP (247 aa). Glu-60 acts as the Proton acceptor in catalysis. Lys-133 serves as the catalytic Proton donor. Residue Cys-166 is the Nucleophile of the active site.

This sequence belongs to the carbon-nitrogen hydrolase superfamily. Aliphatic amidase family.

It carries out the reaction formamide + H2O = formate + NH4(+). In terms of biological role, is an aliphatic amidase with a restricted substrate specificity, as it only hydrolyzes formamide. The polypeptide is Formamidase (Helicobacter pylori (strain G27)).